Reading from the N-terminus, the 185-residue chain is MAAEPKESPSNNPGLHTTPDEATKGYIMQQTMFRIKDPKVSLDFYSRVLGMSLLKRLDFPEMKFSLYFMGYENTAEAPSNPIDKVVWTFSQKATIELTHNWGTESDPEFKGYHNGNSEPRGFGHIGVTVDDTYKACERFQNLGVEFVKKPEDGKMKGIAFIKDPDGYWIEIFDRKTIGNVTQTAA.

The tract at residues 1 to 21 (MAAEPKESPSNNPGLHTTPDE) is disordered. A VOC domain is found at 27 to 174 (IMQQTMFRIK…DGYWIEIFDR (148 aa)). Residues Q30 and R34 each contribute to the substrate site. Q30 contributes to the Zn(2+) binding site. E96 contacts Zn(2+). Substrate is bound by residues N100, R120, H124, and 154-155 (KM). A Zn(2+)-binding site is contributed by H124. E170 contacts Zn(2+). The active-site Proton donor/acceptor is E170.

Belongs to the glyoxalase I family. Homodimer. Zn(2+) is required as a cofactor.

The enzyme catalyses (R)-S-lactoylglutathione = methylglyoxal + glutathione. Its pathway is secondary metabolite metabolism; methylglyoxal degradation; (R)-lactate from methylglyoxal: step 1/2. Functionally, catalyzes the conversion of hemimercaptal, formed from methylglyoxal and glutathione, to S-lactoylglutathione. Active toward the hemithioacetal adducts formed by reacting methylglyoxal or phenylglyoxal with glutathione, homoglutathione or gamma-glutamylcysteine, showing no preference for homoglutathione adducts over glutathione adducts. This is Lactoylglutathione lyase (GLXI) from Glycine max (Soybean).